The sequence spans 213 residues: MWGVVATATYETVYISFASTLLAVLVGVPVGIWTFLTGKNEILQNNRTHFVLNTIINIGRSIPFIILLLILLPVTRFIVGTVLGTTAAIIPLSICAMPFVARLTANALMEIPNGLTEAAQAMGATKWQIVRKFYLSEALPTLINGVTLTLVTLVGYSAMAGTQGGGGLGSLAINYGRIRNMPYVTWVATIIIVLFVMISQKLGDTLAKKVDHR.

The ABC transmembrane type-1 domain occupies 9–202 (TYETVYISFA…VLFVMISQKL (194 aa)). A run of 5 helical transmembrane segments spans residues 13-33 (VYISFASTLLAVLVGVPVGIW), 50-72 (FVLNTIINIGRSIPFIILLLILL), 89-109 (IIPLSICAMPFVARLTANALM), 139-159 (LPTLINGVTLTLVTLVGYSAM), and 183-203 (YVTWVATIIIVLFVMISQKLG).

The protein belongs to the binding-protein-dependent transport system permease family. CysTW subfamily.

The protein resides in the cell inner membrane. Part of the binding-protein-dependent transport system for D-methionine. Probably responsible for the translocation of the substrate across the membrane. The protein is Probable D-methionine transport system permease protein MetI (metI) of Haemophilus influenzae (strain ATCC 51907 / DSM 11121 / KW20 / Rd).